Reading from the N-terminus, the 126-residue chain is Protein ApaG (126 aa).

In terms of domain architecture, ApaG spans 2-126; sequence SDPRYQIDVS…FRLAVPGALH (125 aa).

This is Protein ApaG from Pseudomonas entomophila (strain L48).